Here is a 506-residue protein sequence, read N- to C-terminus: Nostrin (506 aa).

Residues 1–260 (MRDPLTDCSY…AISKVDVEKD (260 aa)) form the F-BAR domain. Serine 114 is subject to Phosphoserine. Coiled-coil stretches lie at residues 160 to 230 (SLTQ…LNQY) and 305 to 334 (KLGRLQRDIEKASRDKEGLERKLKALASSS). The REM-1 domain occupies 292 to 372 (PMDKERRKSL…SYKLSSVLAD (81 aa)). The segment at 413–435 (KAESKAPAGGQNNPSSSPSGSTV) is disordered. Positions 419-435 (PAGGQNNPSSSPSGSTV) are enriched in low complexity. The SH3 domain occupies 438-497 (ASKHLCKALYTFQARQDDELNLEKGDIVTVHEKKEEGWWFGSLKGKRGHFPAAYVEELPP). At serine 479 the chain carries Phosphoserine.

As to quaternary structure, homotrimer. Interacts with NOS3, DNM2, WASL and CAV1. Interacts with DAB2. Interacts (via SH3 domain) with DNM2; this interaction allows the recruitment of NOS3 to dynamin-positive structures.

It localises to the cell membrane. Its subcellular location is the cytoplasmic vesicle. The protein resides in the cytoplasm. It is found in the cytoskeleton. The protein localises to the nucleus. Functionally, multivalent adapter protein which may decrease NOS3 activity by inducing its translocation away from the plasma membrane. The protein is Nostrin of Mus musculus (Mouse).